Here is a 369-residue protein sequence, read N- to C-terminus: 4-hydroxy-3-methylbut-2-en-1-yl diphosphate synthase (flavodoxin) (369 aa).

[4Fe-4S] cluster-binding residues include cysteine 270, cysteine 273, cysteine 305, and glutamate 312.

The protein belongs to the IspG family. [4Fe-4S] cluster is required as a cofactor.

The catalysed reaction is (2E)-4-hydroxy-3-methylbut-2-enyl diphosphate + oxidized [flavodoxin] + H2O + 2 H(+) = 2-C-methyl-D-erythritol 2,4-cyclic diphosphate + reduced [flavodoxin]. It participates in isoprenoid biosynthesis; isopentenyl diphosphate biosynthesis via DXP pathway; isopentenyl diphosphate from 1-deoxy-D-xylulose 5-phosphate: step 5/6. Its function is as follows. Converts 2C-methyl-D-erythritol 2,4-cyclodiphosphate (ME-2,4cPP) into 1-hydroxy-2-methyl-2-(E)-butenyl 4-diphosphate. The protein is 4-hydroxy-3-methylbut-2-en-1-yl diphosphate synthase (flavodoxin) of Pseudomonas putida (strain W619).